A 274-amino-acid chain; its full sequence is Pantothenate synthetase (274 aa).

27-34 (MGALHKGH) lines the ATP pocket. The Proton donor role is filled by His-34. Gln-58 serves as a coordination point for (R)-pantoate. Beta-alanine is bound at residue Gln-58. ATP is bound at residue 145-148 (GQKD). Residue Gln-151 participates in (R)-pantoate binding. 182 to 185 (LSSR) contacts ATP.

The protein belongs to the pantothenate synthetase family. In terms of assembly, homodimer.

Its subcellular location is the cytoplasm. The enzyme catalyses (R)-pantoate + beta-alanine + ATP = (R)-pantothenate + AMP + diphosphate + H(+). Its pathway is cofactor biosynthesis; (R)-pantothenate biosynthesis; (R)-pantothenate from (R)-pantoate and beta-alanine: step 1/1. Catalyzes the condensation of pantoate with beta-alanine in an ATP-dependent reaction via a pantoyl-adenylate intermediate. The protein is Pantothenate synthetase of Wolinella succinogenes (strain ATCC 29543 / DSM 1740 / CCUG 13145 / JCM 31913 / LMG 7466 / NCTC 11488 / FDC 602W) (Vibrio succinogenes).